We begin with the raw amino-acid sequence, 1372 residues long: MGFGRGCETTAVPLLVAVAALLVGTAGHLYPGEVCPGMDIRNNLTRLHELENCSVIEGHLQILLMFKTRPEDFRDLSFPKLIMITDYLLLFRVYGLESLKDLFPNLTVIRGSRLFFNYALVIFEMVHLKELGLYNLMNITRGSVRIEKNNELCYLATIDWSRILDSVEDNYIVLNKDDNEECGDVCPGTAKGKTNCPATVINGQFVERCWTHSHCQKVCPTICKSHGCTAEGLCCHKECLGNCSEPDDPTKCVACRNFYLDGQCVETCPPPYYHFQDWRCVNFSFCQDLHFKCRNSRKPGCHQYVIHNNKCIPECPSGYTMNSSNLMCTPCLGPCPKVCQILEGEKTIDSVTSAQELRGCTVINGSLIINIRGGNNLAAELEANLGLIEEISGFLKIRRSYALVSLSFFRKLHLIRGETLEIGNYSFYALDNQNLRQLWDWSKHNLTITQGKLFFHYNPKLCLSEIHKMEEVSGTKGRQERNDIALKTNGDQASCENELLKFSFIRTSFDKILLRWEPYWPPDFRDLLGFMLFYKEAPYQNVTEFDGQDACGSNSWTVVDIDPPQRSNDPKSQTPSHPGWLMRGLKPWTQYAIFVKTLVTFSDERRTYGAKSDIIYVQTDATNPSVPLDPISVSNSSSQIILKWKPPSDPNGNITHYLVYWERQAEDSELFELDYCLKGLKLPSRTWSPPFESDDSQKHNQSEYDDSASECCSCPKTDSQILKELEESSFRKTFEDYLHNVVFVPRPSRKRRSLEEVGNVTATTLTLPDFPNVSSTIVPTSQEEHRPFEKVVNKESLVISGLRHFTGYRIELQACNQDSPDERCSVAAYVSARTMPEAKADDIVGPVTHEIFENNVVHLMWQEPKEPNGLIVLYEVSYRRYGDEELHLCVSRKHFALERGCRLRGLSPGNYSVRVRATSLAGNGSWTEPTYFYVTDYLDVPSNIAKIIIGPLIFVFLFSVVIGSIYLFLRKRQPDGPMGPLYASSNPEYLSASDVFPSSVYVPDEWEVPREKITLLRELGQGSFGMVYEGNAKDIIKGEAETRVAVKTVNESASLRERIEFLNEASVMKGFTCHHVVRLLGVVSKGQPTLVVMELMAHGDLKSHLRSLRPDAENNPGRPPPTLQEMIQMTAEIADGMAYLNAKKFVHRDLAARNCMVAHDFTVKIGDFGMTRDIYETDYYRKGGKGLLPVRWMSPESLKDGVFTASSDMWSFGVVLWEITSLAEQPYQGLSNEQVLKFVMDGGYLDPPDNCPERLTDLMRMCWQFNPKMRPTFLEIVNLLKDDLHPSFPEVSFFYSEENKAPESEELEMEFEDMENVPLDRSSHCQREEAGGREGGSSLSIKRTYDEHIPYTHMNGGKKNGRVLTLPRSNPS.

The signal sequence occupies residues 1–27 (MGFGRGCETTAVPLLVAVAALLVGTAG). Extracellular segments lie at residues 28 to 748 (HLYP…PRPS) and 753 to 946 (SLEE…NIAK). C35 and C53 are oxidised to a cystine. N-linked (GlcNAc...) asparagine glycans are attached at residues N43, N52, N105, and N138. Intrachain disulfides connect C153/C182, C186/C209, C196/C215, C219/C228, C223/C234, C235/C243, C239/C252, C255/C264, and C268/C280. Residue N242 is glycosylated (N-linked (GlcNAc...) asparagine). The N-linked (GlcNAc...) asparagine glycan is linked to N282. 5 cysteine pairs are disulfide-bonded: C286-C311, C293-C301, C315-C328, C331-C335, and C339-C360. N-linked (GlcNAc...) asparagine glycosylation is present at N322. N364 carries N-linked (GlcNAc...) asparagine glycosylation. A Phosphoserine modification is found at S400. Y401 carries the post-translational modification Phosphotyrosine. S407 is subject to Phosphoserine. Residues N424 and N445 are each glycosylated (N-linked (GlcNAc...) asparagine). Cysteines 462 and 495 form a disulfide. 4 N-linked (GlcNAc...) asparagine glycosylation sites follow: N541, N635, N653, and N700. The Fibronectin type-III 1 domain occupies 626-728 (VPLDPISVSN…SQILKELEES (103 aa)). Intrachain disulfides connect C676-C889 and C815-C824. Positions 688–709 (SPPFESDDSQKHNQSEYDDSAS) are disordered. The segment at 735-743 (EDYLHNVVF) is insulin-binding. Fibronectin type-III domains are found at residues 744–838 (VPRP…MPEA) and 843–937 (IVGP…VTDY). 2 N-linked (GlcNAc...) asparagine glycosylation sites follow: N759 and N772. Residues N910 and N923 are each glycosylated (N-linked (GlcNAc...) asparagine). Residues 947 to 967 (IIIGPLIFVFLFSVVIGSIYL) form a helical membrane-spanning segment. Residues 968–1372 (FLRKRQPDGP…VLTLPRSNPS (405 aa)) are Cytoplasmic-facing. The tract at residues 986 to 989 (NPEY) is important for interaction with IRS1, SHC1 and STAT5B. A Phosphotyrosine; by autocatalysis modification is found at Y989. The Protein kinase domain occupies 1013 to 1288 (ITLLRELGQG…LLKDDLHPSF (276 aa)). ATP-binding residues include S1023 and K1047. A Glycyl lysine isopeptide (Lys-Gly) (interchain with G-Cter in ubiquitin) cross-link involves residue K1069. S-nitrosocysteine is present on C1073. 1094 to 1100 (ELMAHGD) contributes to the ATP binding site. Residue D1149 is the Proton donor/acceptor of the active site. ATP contacts are provided by residues 1153-1154 (RN) and D1167. A phosphotyrosine; by autocatalysis mark is found at Y1175, Y1179, Y1180, Y1345, and Y1351. Residues 1349-1372 (IPYTHMNGGKKNGRVLTLPRSNPS) are disordered. The tract at residues 1351–1354 (YTHM) is PIK3R1 binding.

The protein belongs to the protein kinase superfamily. Tyr protein kinase family. Insulin receptor subfamily. As to quaternary structure, tetramer of 2 alpha and 2 beta chains linked by disulfide bonds. The alpha chains carry the insulin-binding regions, while the beta chains carry the kinase domain. Forms a hybrid receptor with IGF1R, the hybrid is a tetramer consisting of 1 alpha chain and 1 beta chain of INSR and 1 alpha chain and 1 beta chain of IGF1R. Interacts with SORBS1 but dissociates from it following insulin stimulation. Binds SH2B2. Activated form of INSR interacts (via Tyr-989) with the PTB/PID domains of IRS1 and SHC1. The sequences surrounding the phosphorylated NPXY motif contribute differentially to either IRS1 or SHC1 recognition. Interacts (via tyrosines in the C-terminus) with IRS2 (via PTB domain and 591-786 AA); the 591-786 would be the primary anchor of IRS2 to INSR while the PTB domain would have a stabilizing action on the interaction with INSR. Interacts with the SH2 domains of the 85 kDa regulatory subunit of PI3K (PIK3R1) in vitro, when autophosphorylated on tyrosine residues. Interacts with SOCS7. Interacts (via the phosphorylated Tyr-989), with SOCS3. Interacts (via the phosphorylated Tyr-1175, Tyr-1179, Tyr-1180) with SOCS1. Interacts with CAV2 (tyrosine-phosphorylated form); the interaction is increased with 'Tyr-27'phosphorylation of CAV2. Interacts with ARRB2. Interacts with GRB10; this interaction blocks the association between IRS1/IRS2 and INSR, significantly reduces insulin-stimulated tyrosine phosphorylation of IRS1 and IRS2 and thus decreases insulin signaling. Interacts with GRB7. Interacts with PDPK1. Interacts (via Tyr-1180) with GRB14 (via BPS domain); this interaction protects the tyrosines in the activation loop from dephosphorylation, but promotes dephosphorylation of Tyr-989, this results in decreased interaction with, and phosphorylation of, IRS1. Interacts (via subunit alpha) with ENPP1 (via 485-599 AA); this interaction blocks autophosphorylation. Interacts with PTPRE; this interaction is dependent of Tyr-1175, Tyr-1179 and Tyr-1180 of the INSR. Interacts with STAT5B (via SH2 domain). Interacts with PTPRF. Interacts with the insulin receptor SORL1; this interaction strongly increases its surface exposure, hence strengthens insulin signal reception. Interacts (tyrosine phosphorylated) with CCDC88A/GIV (via SH2-like region); binding requires autophosphorylation of the INSR C-terminal region. Interacts with GNAI3; the interaction is probably mediated by CCDC88A/GIV. Interacts with LMBRD1. Interacts (in response to insulin stimulation) with NCK1; this interaction may recruit PTPN1 to mediate INSR dephosphorylation. Interacts with CD248; this interaction diminishes INSR autophosphorylation. In terms of processing, after being transported from the endoplasmic reticulum to the Golgi apparatus, the single glycosylated precursor is further glycosylated and then cleaved, followed by its transport to the plasma membrane. Autophosphorylated on tyrosine residues in response to insulin. Phosphorylation of Tyr-989 is required for IRS1-, SHC1-, and STAT5B-binding. Dephosphorylated by PTPRE on Tyr-989, Tyr-1175, Tyr-1179 and Tyr-1180 residues. May also be phosphorylated at Tyr-1175 and Tyr-1180 by mTORC2. Dephosphorylated by PTPRF and PTPN1. Dephosphorylated by PTPN2 and Ptprv; down-regulates insulin-induced signaling. Post-translationally, S-nitrosylation at Cys-1073 by BLVRB inhibits the receptor tyrosine kinase, thereby inhibiting insulin signaling. In terms of processing, ubiquitinated by MARCHF1; leading to degradation thereby reducing surface INSR expression.

Its subcellular location is the cell membrane. The protein localises to the recycling endosome membrane. The protein resides in the late endosome. It is found in the lysosome. It carries out the reaction L-tyrosyl-[protein] + ATP = O-phospho-L-tyrosyl-[protein] + ADP + H(+). With respect to regulation, activated in response to insulin. Autophosphorylation activates the kinase activity. PTPN1, PTPRE and PTPRF dephosphorylate important tyrosine residues, thereby reducing INSR activity. Inhibited by ENPP1. GRB10 and GRB14 inhibit the catalytic activity of the INSR, they block access of substrates to the activated receptor. SOCS1 and SOCS3 act as negative regulators of INSR activity, they bind to the activated INRS and interfere with the phosphorylation of INSR substrates. Interacts with PTPRF. Interacts with ATIC; ATIC together with PRKAA2/AMPK2 and HACD3/PTPLAD1 is proposed to be part of a signaling netwok regulating INSR autophosphorylation and endocytosis. In terms of biological role, receptor tyrosine kinase which mediates the pleiotropic actions of insulin. Binding of insulin leads to phosphorylation of several intracellular substrates, including, insulin receptor substrates (IRS1, 2, 3, 4), SHC, GAB1, CBL and other signaling intermediates. Each of these phosphorylated proteins serve as docking proteins for other signaling proteins that contain Src-homology-2 domains (SH2 domain) that specifically recognize different phosphotyrosine residues, including the p85 regulatory subunit of PI3K and SHP2. Phosphorylation of IRSs proteins lead to the activation of two main signaling pathways: the PI3K-AKT/PKB pathway, which is responsible for most of the metabolic actions of insulin, and the Ras-MAPK pathway, which regulates expression of some genes and cooperates with the PI3K pathway to control cell growth and differentiation. Binding of the SH2 domains of PI3K to phosphotyrosines on IRS1 leads to the activation of PI3K and the generation of phosphatidylinositol-(3, 4, 5)-triphosphate (PIP3), a lipid second messenger, which activates several PIP3-dependent serine/threonine kinases, such as PDPK1 and subsequently AKT/PKB. The net effect of this pathway is to produce a translocation of the glucose transporter SLC2A4/GLUT4 from cytoplasmic vesicles to the cell membrane to facilitate glucose transport. Moreover, upon insulin stimulation, activated AKT/PKB is responsible for: anti-apoptotic effect of insulin by inducing phosphorylation of BAD; regulates the expression of gluconeogenic and lipogenic enzymes by controlling the activity of the winged helix or forkhead (FOX) class of transcription factors. Another pathway regulated by PI3K-AKT/PKB activation is mTORC1 signaling pathway which regulates cell growth and metabolism and integrates signals from insulin. AKT mediates insulin-stimulated protein synthesis by phosphorylating TSC2 thereby activating mTORC1 pathway. The Ras/RAF/MAP2K/MAPK pathway is mainly involved in mediating cell growth, survival and cellular differentiation of insulin. Phosphorylated IRS1 recruits GRB2/SOS complex, which triggers the activation of the Ras/RAF/MAP2K/MAPK pathway. In addition to binding insulin, the insulin receptor can bind insulin-like growth factors (IGFI and IGFII). When present in a hybrid receptor with IGF1R, binds IGF1. In adipocytes, inhibits lipolysis. This Mus musculus (Mouse) protein is Insulin receptor (Insr).